A 413-amino-acid polypeptide reads, in one-letter code: DnaJ protein homolog xdj1 (413 aa).

One can recognise a J domain in the interval 6–73 (KLYDILEVHF…ESREMYDMYG (68 aa)). The CR-type zinc-finger motif lies at 134 to 219 (GKEVKLRATR…CKGSGTVPEQ (86 aa)). CXXCXGXG motif repeat units lie at residues 147-154 (CPRCQGRG), 164-171 (CLSCDGKG), 191-198 (CDTCNGKG), and 207-214 (CKHCKGSG). Cys-410 bears the Cysteine methyl ester mark. Cys-410 carries S-farnesyl cysteine lipidation. Residues 411–413 (QAQ) constitute a propeptide, removed in mature form.

The protein resides in the endoplasmic reticulum membrane. The polypeptide is DnaJ protein homolog xdj1 (xdj1) (Schizosaccharomyces pombe (strain 972 / ATCC 24843) (Fission yeast)).